The sequence spans 261 residues: Calbindin (261 aa).

Residue Ala2 is modified to N-acetylalanine. Residues Ala2 to Gln7 form an interaction with RANBP9 region. 5 consecutive EF-hand domains span residues Ile11–Ala46, Glu53–Phe88, Lys98–Lys133, Lys142–Phe177, and Met186–Lys221. The Ca(2+) site is built by Asp24, Asp26, Ser28, Tyr30, and Glu35. Asp111, Asp113, Ser115, Glu122, Asp155, Asn157, Asp159, Lys161, Glu166, Asp199, Asp201, Asn203, Tyr205, and Glu210 together coordinate Ca(2+).

The protein belongs to the calbindin family. As to quaternary structure, interacts with RANBP9.

In terms of biological role, buffers cytosolic calcium. May stimulate a membrane Ca(2+)-ATPase and a 3',5'-cyclic nucleotide phosphodiesterase. This chain is Calbindin (CALB1), found in Homo sapiens (Human).